Consider the following 387-residue polypeptide: Acyltransferase MdmB (387 aa).

Transmembrane regions (helical) follow at residues 8 to 28, 45 to 65, 85 to 105, 139 to 161, 170 to 190, 209 to 229, 236 to 256, 258 to 278, 292 to 312, and 336 to 356; these read LPSLTGLRWFAALAVFACHIA, ITTLGSIAVSVFFLLSGFVLA, IYPLHLVTFLIAGVIIFSLAE, TPSWSLSCEFAFYLTFPLWYRLV, WWCAAGIAAAVICVPFVTSQF, CWLPPVRMLEFVLGIVMALIL, GPGVVSSALLLAAAYGVTQVV, PMFTIAACSIVPAALLITALA, AVLVRLGEWSFAFYLVHFMVI, and ALALAMLAVAIVAGGLLHTVV.

It belongs to the acyltransferase 3 family.

The protein localises to the cell membrane. In terms of biological role, catalyzes the acylation of the mycaminose sugar during midecamycin biosynthesis. The sequence is that of Acyltransferase MdmB (mdmB) from Streptomyces mycarofaciens.